The following is a 160-amino-acid chain: MEKVPMTANGYAALQVELKQRQTVDRPRIIEHIAEARSHGDLSENAEYHAAKEEQSHNEGRIADLEDKLARADVIDITKLSGDTIMFGATVTLVDEDTEKKAVWQIVGEPEADAKKGRISITSPLARALIGKKKGASVEVMAPGGAKAYEITKVEWREPS.

Residues 49-73 (HAAKEEQSHNEGRIADLEDKLARAD) adopt a coiled-coil conformation.

Belongs to the GreA/GreB family.

In terms of biological role, necessary for efficient RNA polymerase transcription elongation past template-encoded arresting sites. The arresting sites in DNA have the property of trapping a certain fraction of elongating RNA polymerases that pass through, resulting in locked ternary complexes. Cleavage of the nascent transcript by cleavage factors such as GreA or GreB allows the resumption of elongation from the new 3'terminus. GreA releases sequences of 2 to 3 nucleotides. This Rhodopseudomonas palustris (strain BisA53) protein is Transcription elongation factor GreA.